A 459-amino-acid polypeptide reads, in one-letter code: Exodeoxyribonuclease 7 large subunit (459 aa).

Belongs to the XseA family. As to quaternary structure, heterooligomer composed of large and small subunits.

It localises to the cytoplasm. The enzyme catalyses Exonucleolytic cleavage in either 5'- to 3'- or 3'- to 5'-direction to yield nucleoside 5'-phosphates.. Functionally, bidirectionally degrades single-stranded DNA into large acid-insoluble oligonucleotides, which are then degraded further into small acid-soluble oligonucleotides. The polypeptide is Exodeoxyribonuclease 7 large subunit (Pseudomonas savastanoi pv. phaseolicola (strain 1448A / Race 6) (Pseudomonas syringae pv. phaseolicola (strain 1448A / Race 6))).